Here is a 431-residue protein sequence, read N- to C-terminus: 23S rRNA (uracil(1939)-C(5))-methyltransferase RlmD (431 aa).

The 59-residue stretch at 10-68 (RVTTRQIITVKVNDLDSFGQGVARHNGKALFIPGLLPEESAEVIITEDKKQFARARVSR) folds into the TRAM domain. 4 residues coordinate [4Fe-4S] cluster: Cys81, Cys87, Cys90, and Cys161. S-adenosyl-L-methionine-binding residues include Gln264, Phe293, Asn298, Glu314, Asn341, and Asp362. Cys388 functions as the Nucleophile in the catalytic mechanism.

It belongs to the class I-like SAM-binding methyltransferase superfamily. RNA M5U methyltransferase family. RlmD subfamily.

It carries out the reaction uridine(1939) in 23S rRNA + S-adenosyl-L-methionine = 5-methyluridine(1939) in 23S rRNA + S-adenosyl-L-homocysteine + H(+). Functionally, catalyzes the formation of 5-methyl-uridine at position 1939 (m5U1939) in 23S rRNA. The polypeptide is 23S rRNA (uracil(1939)-C(5))-methyltransferase RlmD (Salmonella paratyphi A (strain ATCC 9150 / SARB42)).